A 651-amino-acid polypeptide reads, in one-letter code: MAAHVEQLEFQAEARQLLDLMIHSVYSNKDSFLRELVSNASDALDKLRLESFRNKDLDVDTSDLHIEIDVDKEARTLTVRDNGIGMTRDEVVSLIGTLAKSGTGELRQQLREAKDKDTSEELIGQFGIGFYASFMVADRVELLTRKAGESEATRWESSGEGTYTIETVDQAGGEVPQGTSVTLHLKPEDREDELHDYTSEWKIRELVKQYSDFIAWPIRMEVERRTPAPEDGGEESVTVETETLNSMKALWARPRDEVSDEEYTEFYKHVAHAWDEPLEVIAMKAEGTFEYQALLFIPSHAPFDLFNQNAAVGVQLYVKRVFIMGDCDQLMPPYLRFVKGVVDAQDMSLNVSREILQQDRQIRAIRRRLTKKVLSTITEMQTERPEKYRTFWTQFGRVLKEGLLTDIENQETLLRVCSFASTHSEDEPTTLAEYVERMPDGQSQIFYAAGESRQQLLHSPHLEAFKAKGYEVLLLTDPVDEVWVESVHEFDGKPLQSVAKGEVDLDSDADNDGQDAERQEREQGFADLIAWLKEALSDHVKEVRLSTRLTDSPACLITDTFGITPALARMYRASGQPVPVEKRILELNPNHPLITGLREAHKSRGADAELVGTAELLYGTALLAEGGVLEDPARFAGLLADRLTRTVGDQT.

The a; substrate-binding stretch occupies residues 1–353; sequence MAAHVEQLEF…AQDMSLNVSR (353 aa). The segment at 354-569 is b; that stretch reads EILQQDRQIR…TFGITPALAR (216 aa). Positions 570–651 are c; sequence MYRASGQPVP…RLTRTVGDQT (82 aa).

Belongs to the heat shock protein 90 family. Homodimer.

Its subcellular location is the cytoplasm. Molecular chaperone. Has ATPase activity. The sequence is that of Chaperone protein HtpG from Mycolicibacterium vanbaalenii (strain DSM 7251 / JCM 13017 / BCRC 16820 / KCTC 9966 / NRRL B-24157 / PYR-1) (Mycobacterium vanbaalenii).